Consider the following 366-residue polypeptide: Probable quinol oxidase subunit 2 (366 aa).

Residues 1–19 form the signal peptide; that stretch reads MSKFKSLLLLFGTLILLSG. Residue Cys20 is the site of N-palmitoyl cysteine attachment. A lipid anchor (S-diacylglycerol cysteine) is attached at Cys20. Transmembrane regions (helical) follow at residues 38 to 58 and 80 to 100; these read FLIL…LGMF and AIIE…LAIP. Residues 330–366 are disordered; it reads EPYNNEFKKDESKNAKEMKKISKDAQDQDNDDHGGGH. The segment covering 335 to 366 has biased composition (basic and acidic residues); it reads EFKKDESKNAKEMKKISKDAQDQDNDDHGGGH.

Belongs to the cytochrome c oxidase subunit 2 family.

The protein resides in the cell membrane. It carries out the reaction 2 a quinol + O2 = 2 a quinone + 2 H2O. Functionally, catalyzes quinol oxidation with the concomitant reduction of oxygen to water. Subunit II transfers the electrons from a quinol to the binuclear center of the catalytic subunit I. This chain is Probable quinol oxidase subunit 2 (qoxA), found in Staphylococcus aureus (strain USA300).